The sequence spans 412 residues: Serine hydroxymethyltransferase 1 (412 aa).

Residues L116 and 120-122 contribute to the (6S)-5,6,7,8-tetrahydrofolate site; that span reads GHL. Position 225 is an N6-(pyridoxal phosphate)lysine (K225).

This sequence belongs to the SHMT family. Homodimer. It depends on pyridoxal 5'-phosphate as a cofactor.

It localises to the cytoplasm. It catalyses the reaction (6R)-5,10-methylene-5,6,7,8-tetrahydrofolate + glycine + H2O = (6S)-5,6,7,8-tetrahydrofolate + L-serine. The protein operates within one-carbon metabolism; tetrahydrofolate interconversion. It participates in amino-acid biosynthesis; glycine biosynthesis; glycine from L-serine: step 1/1. Functionally, catalyzes the reversible interconversion of serine and glycine with tetrahydrofolate (THF) serving as the one-carbon carrier. This reaction serves as the major source of one-carbon groups required for the biosynthesis of purines, thymidylate, methionine, and other important biomolecules. Also exhibits THF-independent aldolase activity toward beta-hydroxyamino acids, producing glycine and aldehydes, via a retro-aldol mechanism. The polypeptide is Serine hydroxymethyltransferase 1 (Pseudomonas fluorescens (strain Pf0-1)).